The sequence spans 727 residues: Probable copper-importing P-type ATPase A (727 aa).

Residues 1–94 (MATNTKMETF…QTYLRKMKFD (94 aa)) lie on the Cytoplasmic side of the membrane. The 65-residue stretch at 6–70 (KMETFVITGM…SVENIGYGAI (65 aa)) folds into the HMA domain. Residues C17 and C20 each coordinate Cu(+). The chain crosses the membrane as a helical span at residues 95 to 115 (LIFSAILTLPLMLAMIAMMLG). At 116–119 (SHGP) the chain is on the extracellular side. The chain crosses the membrane as a helical span at residues 120 to 137 (IVSFFHLSLVQLLFALPV). Over 138 to 161 (QFYVGWRFYKGAYHALKTKAPNMD) the chain is Cytoplasmic. Residues 162–181 (VLVAIGTSAAFALSIYNGFF) form a helical membrane-spanning segment. Residues 182–187 (PSHSHD) lie on the Extracellular side of the membrane. Residues 188-203 (LYFESSSMIITLILLG) traverse the membrane as a helical segment. Over 204–341 (KYLEHTAKSK…PIQQIADKIS (138 aa)) the chain is Cytoplasmic. A helical transmembrane segment spans residues 342–362 (GIFVPIVLFLALVTLLVTGWL). The Extracellular segment spans residues 363–375 (TKDWQLALLHSVS). A helical membrane pass occupies residues 376–396 (VLVIACPCALGLATPTAIMVG). Topologically, residues 397 to 678 (TGVGAHNGIL…AATLKKIKQN (282 aa)) are cytoplasmic. Catalysis depends on D425, which acts as the 4-aspartylphosphate intermediate. Residues D621 and D625 each coordinate Mg(2+). The helical transmembrane segment at 679 to 698 (LFWAFIYNTIGIPFAAFGFL) threads the bilayer. At 699–700 (NP) the chain is on the extracellular side. Residues 701 to 721 (IIAGGAMAFSSISVLLNSLSL) traverse the membrane as a helical segment. Residues 722–727 (NRKTIK) lie on the Cytoplasmic side of the membrane.

It belongs to the cation transport ATPase (P-type) (TC 3.A.3) family. Type IB subfamily. Monomer. Interacts with the copper chaperone CopZ.

It is found in the cell membrane. The catalysed reaction is Cu(+)(in) + ATP + H2O = Cu(+)(out) + ADP + phosphate + H(+). Its activity is regulated as follows. Inhibited by vanadate. In terms of biological role, probably involved in copper import under copper limiting conditions. This is Probable copper-importing P-type ATPase A (copA) from Enterococcus hirae (strain ATCC 9790 / DSM 20160 / JCM 8729 / LMG 6399 / NBRC 3181 / NCIMB 6459 / NCDO 1258 / NCTC 12367 / WDCM 00089 / R).